Consider the following 338-residue polypeptide: Large ribosomal subunit protein uL3 (338 aa).

Disordered stretches follow at residues 1-44, 151-170, 206-259, and 312-338; these read MPQP…GFAG, AVPS…VGGG, VTKG…GQTG, and FRPA…SNQG. A compositionally biased stretch (polar residues) spans 22-31; that stretch reads SETPRFNSWP. Over residues 220–237 the composition is skewed to basic residues; that stretch reads GVQKRKGKHARQGWRRRI. Polar residues predominate over residues 247–259; sequence RVRSTVPQQGQTG.

This sequence belongs to the universal ribosomal protein uL3 family. Part of the 50S ribosomal subunit. Forms a cluster with proteins L14 and L24e. Interacts weakly with protein L13.

In terms of biological role, one of the primary rRNA binding proteins, it binds directly near the 3'-end of the 23S rRNA, where it nucleates assembly of the 50S subunit. This chain is Large ribosomal subunit protein uL3 (rpl3), found in Haloarcula marismortui (strain ATCC 43049 / DSM 3752 / JCM 8966 / VKM B-1809) (Halobacterium marismortui).